The following is a 193-amino-acid chain: Peptidyl-tRNA hydrolase (193 aa).

Y17 is a binding site for tRNA. H22 acts as the Proton acceptor in catalysis. F68, N70, and N115 together coordinate tRNA.

The protein belongs to the PTH family. Monomer.

The protein localises to the cytoplasm. The enzyme catalyses an N-acyl-L-alpha-aminoacyl-tRNA + H2O = an N-acyl-L-amino acid + a tRNA + H(+). Its function is as follows. Hydrolyzes ribosome-free peptidyl-tRNAs (with 1 or more amino acids incorporated), which drop off the ribosome during protein synthesis, or as a result of ribosome stalling. Catalyzes the release of premature peptidyl moieties from peptidyl-tRNA molecules trapped in stalled 50S ribosomal subunits, and thus maintains levels of free tRNAs and 50S ribosomes. The chain is Peptidyl-tRNA hydrolase from Alteromonas mediterranea (strain DSM 17117 / CIP 110805 / LMG 28347 / Deep ecotype).